The primary structure comprises 569 residues: Santalene synthase (569 aa).

(2E)-geranyl diphosphate-binding residues include Arg284, Asp321, Asp325, and Arg460. Mg(2+) is bound by residues Asp321 and Asp325. A DDXXD motif motif is present at residues Asp321–Asp325. Positions 463, 467, and 471 each coordinate Mg(2+).

The protein belongs to the terpene synthase family. Tpsb subfamily. The cofactor is Mg(2+). Mn(2+) is required as a cofactor.

The catalysed reaction is (2E,6E)-farnesyl diphosphate = (1S,5S,6R)-alpha-bergamotene + diphosphate. It carries out the reaction (2E,6E)-farnesyl diphosphate = (+)-alpha-santalene + diphosphate. It catalyses the reaction (2E,6E)-farnesyl diphosphate = (-)-beta-santalene + diphosphate. Its function is as follows. Catalyzes a mixture of sesquiterpenoids from (2E,6E)-farnesyl diphosphate in fragrance biosynthesis. Catalyzes the formation of alpha-santalene, beta-santalene, epi-beta-santalene and exo-alpha-bergamotene, as well as traces of alpha-farnesene and beta-farnesene. The polypeptide is Santalene synthase (Santalum austrocaledonicum (Sandalwood)).